The primary structure comprises 93 residues: Large ribosomal subunit protein uL23cz/uL23cy (93 aa).

The protein belongs to the universal ribosomal protein uL23 family. In terms of assembly, part of the 50S ribosomal subunit.

The protein resides in the plastid. It is found in the chloroplast. Its function is as follows. Binds to 23S rRNA. This chain is Large ribosomal subunit protein uL23cz/uL23cy (rpl23-A), found in Lotus japonicus (Lotus corniculatus var. japonicus).